A 303-amino-acid polypeptide reads, in one-letter code: Mitochondrial carrier homolog 2 (303 aa).

The residue at position 2 (Ala-2) is an N-acetylalanine. The Mitochondrial intermembrane segment spans residues 2–15 (ADAASQVLLGSGLT). Solcar repeat units follow at residues 2-98 (ADAA…YQES) and 118-206 (DHVI…VNTY). The helical transmembrane segment at 16-36 (ILSQPLMYVKVLIQVGYEPLP) threads the bilayer. Over 37–77 (PTIGRNIFGRQVCQLPGLFSYAQHIASIDGRRGLFTGLTPR) the chain is Cytoplasmic. The chain crosses the membrane as a helical span at residues 78–92 (LCSGVLGTVVHGKVL). At 93–135 (QHYQESDKGEELGPGNVQKEVSSSFDHVIKETTREMIARSAAT) the chain is on the mitochondrial intermembrane side. The helical transmembrane segment at 136 to 156 (LITHPFHVITLRSMVQFIGRE) threads the bilayer. Residues 157–180 (SKYCGLCDSIITIYREEGILGFFA) are Cytoplasmic-facing. Residues 181–199 (GLVPRLLGDILSLWLCNSL) traverse the membrane as a helical segment. Residues 200–231 (AYLVNTYALDSGVSTMNEMKSYSQAVTGFFAS) lie on the Mitochondrial intermembrane side of the membrane. Residues 232–252 (MLTYPFVLVSNLMAVNNCGLA) form a helical membrane-spanning segment. Topologically, residues 253-280 (GGCPPYSPIYTSWIDCWCMLQKEGNMSR) are cytoplasmic. A helical membrane pass occupies residues 281 to 303 (GNSLFFRKVPFGKTYCCDLKMLI).

Belongs to the mitochondrial carrier (TC 2.A.29) family. In terms of assembly, interacts with p15BID.

Its subcellular location is the mitochondrion outer membrane. Its function is as follows. Protein insertase that mediates insertion of transmembrane proteins into the mitochondrial outer membrane. Catalyzes insertion of proteins with alpha-helical transmembrane regions, such as signal-anchored, tail-anchored and multi-pass membrane proteins. Does not mediate insertion of beta-barrel transmembrane proteins. Also acts as a receptor for the truncated form of pro-apoptotic BH3-interacting domain death agonist (p15 BID) and has therefore a critical function in apoptosis. Regulates the quiescence/cycling of hematopoietic stem cells (HSCs). Acts as a regulator of mitochondrial fusion, essential for the naive-to-primed interconversion of embryonic stem cells (ESCs). Acts as a regulator of lipid homeostasis and has a regulatory role in adipocyte differentiation and biology. In Homo sapiens (Human), this protein is Mitochondrial carrier homolog 2.